Here is a 215-residue protein sequence, read N- to C-terminus: Ribonuclease HII (215 aa).

An RNase H type-2 domain is found at 19-214 (KNVIGVDEAG…KILETEEEKT (196 aa)). The a divalent metal cation site is built by Asp-25, Glu-26, and Asp-121.

This sequence belongs to the RNase HII family. Requires Mn(2+) as cofactor. It depends on Mg(2+) as a cofactor.

Its subcellular location is the cytoplasm. It carries out the reaction Endonucleolytic cleavage to 5'-phosphomonoester.. Its function is as follows. Endonuclease that specifically degrades the RNA of RNA-DNA hybrids. The chain is Ribonuclease HII from Fusobacterium nucleatum subsp. nucleatum (strain ATCC 25586 / DSM 15643 / BCRC 10681 / CIP 101130 / JCM 8532 / KCTC 2640 / LMG 13131 / VPI 4355).